The following is a 200-amino-acid chain: Prolactin-2 (200 aa).

The signal sequence occupies residues 1–23; the sequence is MRQRRISGSNLMMVLCVVAMCRA. Disulfide bonds link cysteine 64/cysteine 173 and cysteine 190/cysteine 200.

Belongs to the somatotropin/prolactin family.

Its subcellular location is the secreted. The polypeptide is Prolactin-2 (prl2) (Oreochromis mossambicus (Mozambique tilapia)).